We begin with the raw amino-acid sequence, 230 residues long: Early E1A protein (230 aa).

The segment at 40–48 (PSLHDLFDL) is interaction with RB1 in competition with E2F1. The short motif at 106–110 (LLCLE) is the LXCXE motif, interaction with host RB1 element. A zinc finger spans residues 145–163 (CLRCAYYQEQGENSICGLC). A disordered region spans residues 189–230 (KPGSRKRSAVTSRGSVESSKRPCLPEPEQTEPLDLSLKPRPQ). A PXDLS motif, CTBP-binding motif is present at residues 220–224 (PLDLS). Positions 226-230 (KPRPQ) match the Nuclear localization signal motif.

The protein belongs to the adenoviridae E1A protein family. Interacts with host UBE2I; this interaction interferes with polySUMOylation. Interacts with host RB1; this interaction induces the aberrant dissociation of RB1-E2F1 complex thereby disrupting the activity of RB1 and activating E2F1-regulated genes. Interacts with host ATF7; the interaction enhances ATF7-mediated viral transactivation activity which requires the zinc binding domains of both proteins. Isoform early E1A 32 kDa protein and isoform early E1A 26 kDa protein interact (via N-terminus) with CUL1 and E3 ubiquitin ligase RBX1; these interactions inhibit RBX1-CUL1-dependent elongation reaction of ubiquitin chains and attenuate ubiquitination of SCF(FBXW7) target proteins. Interacts (via PXLXP motif) with host ZMYND11/BS69 (via MYND-type zinc finger); this interaction inhibits E1A mediated transactivation. Interacts with host EP300; this interaction stimulates the acetylation of RB1 by recruiting EP300 and RB1 into a multimeric-protein complex. Interacts with host CTBP1 and CTBP2; this interaction seems to potentiate viral replication. Interacts with host DCAF7. Interacts with host DYRK1A. Interacts with host KPNA4; this interaction allows E1A import into the host nucleus. Interacts with host EP400; this interaction stabilizes MYC. Interacts with host TBP protein; this interaction probably disrupts the TBP-TATA complex.

It is found in the host nucleus. Functionally, plays a role in viral genome replication by driving entry of quiescent cells into the cell cycle. Stimulation of progression from G1 to S phase allows the virus to efficiently use the cellular DNA replicating machinery to achieve viral genome replication. E1A protein has both transforming and trans-activating activities. Induces the disassembly of the E2F1 transcription factor from RB1 by direct competition for the same binding site on RB1, with subsequent transcriptional activation of E2F1-regulated S-phase genes and of the E2 region of the adenoviral genome. Release of E2F1 leads to the ARF-mediated inhibition of MDM2 and causes TP53/p53 to accumulate because it is not targeted for degradation by MDM2-mediated ubiquitination anymore. This increase in TP53, in turn, would arrest the cell proliferation and direct its death but this effect is counteracted by the viral protein E1B-55K. Inactivation of the ability of RB1 to arrest the cell cycle is critical for cellular transformation, uncontrolled cellular growth and proliferation induced by viral infection. Interaction with RBX1 and CUL1 inhibits ubiquitination of the proteins targeted by SCF(FBXW7) ubiquitin ligase complex, and may be linked to unregulated host cell proliferation. The tumorigenesis-restraining activity of E1A may be related to the disruption of the host CtBP-CtIP complex through the CtBP binding motif. In Canine adenovirus serotype 1 (strain CLL) (CAdV-1), this protein is Early E1A protein.